A 1263-amino-acid polypeptide reads, in one-letter code: Kinesin-like protein KIN-12E (1263 aa).

A disordered region spans residues 21–44 (PAPSESLRSVPCTPEANTVSRDNH). Over residues 35-44 (EANTVSRDNH) the composition is skewed to polar residues. One can recognise a Kinesin motor domain in the interval 93-430 (NVQVIIRTRP…LKFAQRAKLI (338 aa)). Residue 174–181 (GQTGSGKT) coordinates ATP. Coiled-coil stretches lie at residues 679 to 737 (SKKL…KIRS), 764 to 805 (AEAH…AEEN), 831 to 881 (ALEV…KRLL), 905 to 966 (SEKS…HQSE), 1091 to 1168 (TDLL…TIQE), and 1193 to 1251 (LRKE…VLSL).

Belongs to the TRAFAC class myosin-kinesin ATPase superfamily. Kinesin family. KIN-12 subfamily.

The sequence is that of Kinesin-like protein KIN-12E from Arabidopsis thaliana (Mouse-ear cress).